The following is a 496-amino-acid chain: 1-aminocyclopropane-1-carboxylate synthase 4 (496 aa).

At Lys300 the chain carries N6-(pyridoxal phosphate)lysine.

Belongs to the class-I pyridoxal-phosphate-dependent aminotransferase family. The cofactor is pyridoxal 5'-phosphate. As to expression, expressed in leaves. Expressed in shoots and leaf blades. Expressed at low levels in leaf sheaths.

It carries out the reaction S-adenosyl-L-methionine = 1-aminocyclopropane-1-carboxylate + S-methyl-5'-thioadenosine + H(+). It functions in the pathway alkene biosynthesis; ethylene biosynthesis via S-adenosyl-L-methionine; ethylene from S-adenosyl-L-methionine: step 1/2. Catalyzes the formation of 1-aminocyclopropane-1-carboxylate, a direct precursor of ethylene in higher plants. The sequence is that of 1-aminocyclopropane-1-carboxylate synthase 4 from Oryza sativa subsp. japonica (Rice).